The chain runs to 293 residues: 3-methyl-2-oxobutanoate hydroxymethyltransferase (293 aa).

A disordered region spans residues 1 to 25 (MTDSPTAGTPYGTLPPASPLPQRRP). 2 residues coordinate Mg(2+): Asp-67 and Asp-110. 3-methyl-2-oxobutanoate is bound by residues 67 to 68 (DS), Asp-110, and Lys-139. Glu-141 lines the Mg(2+) pocket. Glu-208 functions as the Proton acceptor in the catalytic mechanism.

It belongs to the PanB family. Homodecamer; pentamer of dimers. Mg(2+) serves as cofactor.

Its subcellular location is the cytoplasm. The enzyme catalyses 3-methyl-2-oxobutanoate + (6R)-5,10-methylene-5,6,7,8-tetrahydrofolate + H2O = 2-dehydropantoate + (6S)-5,6,7,8-tetrahydrofolate. Its pathway is cofactor biosynthesis; (R)-pantothenate biosynthesis; (R)-pantoate from 3-methyl-2-oxobutanoate: step 1/2. Its function is as follows. Catalyzes the reversible reaction in which hydroxymethyl group from 5,10-methylenetetrahydrofolate is transferred onto alpha-ketoisovalerate to form ketopantoate. The protein is 3-methyl-2-oxobutanoate hydroxymethyltransferase of Acidovorax sp. (strain JS42).